A 509-amino-acid chain; its full sequence is Heat shock 70 kDa protein 14 (509 aa).

The protein belongs to the heat shock protein 70 family. Component of ribosome-associated complex (RAC), a heterodimer composed of Hsp70/DnaK-type chaperone HSPA14 and Hsp40/DnaJ-type chaperone DNAJC2.

The protein localises to the cytoplasm. Its subcellular location is the cytosol. Component of the ribosome-associated complex (RAC), a complex involved in folding or maintaining nascent polypeptides in a folding-competent state. In the RAC complex, binds to the nascent polypeptide chain, while DNAJC2 stimulates its ATPase activity. In Macaca fascicularis (Crab-eating macaque), this protein is Heat shock 70 kDa protein 14 (HSPA14).